The sequence spans 2410 residues: Genome polyprotein 1 (2410 aa).

Positions 1 to 22 (MEQTLAQAVSRKSKTDTPMAEE) are disordered. The region spanning 474-632 (KMADANNCWS…AARKYPLHVE (159 aa)) is the Helicase ATP-binding domain. 487–494 (GHTGSGKS) lines the ATP pocket. The 167-residue stretch at 647-813 (GGGDLLDISK…NVPFYMNETF (167 aa)) folds into the Helicase C-terminal domain. Residue tyrosine 1234 is modified to O-(5'-phospho-RNA)-tyrosine. One can recognise a Peptidase C4 domain in the interval 1359–1573 (ITLEASTGIL…CGYASHTALF (215 aa)). Catalysis depends on for nuclear inclusion protein A activity residues histidine 1404, aspartate 1440, and cysteine 1507. Positions 1857–1980 (WLHGSGDGSR…AISPQFDEEF (124 aa)) constitute a RdRp catalytic domain. Positions 2173-2200 (TRTPTEDDGKLKTPSGARIPSSAADGNW) are disordered.

Belongs to the bymoviruses polyprotein 1 family. In terms of processing, VPg is uridylylated by the polymerase and is covalently attached to the 5'-end of the genomic RNA. This uridylylated form acts as a nucleotide-peptide primer for the polymerase. The viral RNA1 of bymoviruses is expressed as a single polyprotein which undergoes post-translational proteolytic processing by the main proteinase NIa-pro resulting in the production of at least eight individual proteins.

It localises to the host cytoplasmic vesicle. Its subcellular location is the virion. It carries out the reaction RNA(n) + a ribonucleoside 5'-triphosphate = RNA(n+1) + diphosphate. The enzyme catalyses Hydrolyzes glutaminyl bonds, and activity is further restricted by preferences for the amino acids in P6 - P1' that vary with the species of potyvirus, e.g. Glu-Xaa-Xaa-Tyr-Xaa-Gln-|-(Ser or Gly) for the enzyme from tobacco etch virus. The natural substrate is the viral polyprotein, but other proteins and oligopeptides containing the appropriate consensus sequence are also cleaved.. In terms of biological role, indispensable for virus replication. Mediates the cap-independent, EIF4E-dependent translation of viral genomic RNAs. Binds to the cap-binding site of host EIF4E and thus interferes with the host EIF4E-dependent mRNA export and translation. VPg-RNA directly binds EIF4E and is a template for transcription. Also forms trimeric complexes with EIF4E-EIF4G, which are templates for translation. Functionally, has RNA-binding and proteolytic activities. Its function is as follows. An RNA-dependent RNA polymerase that plays an essential role in the virus replication. The chain is Genome polyprotein 1 from Hordeum vulgare (Barley).